The sequence spans 175 residues: Pycsar effector protein RsPycTM (175 aa).

3 consecutive transmembrane segments (helical) span residues 17-37, 44-64, and 146-166; these read AKNA…ITLL, PLGF…AAII, and AGSL…LFCI.

The protein resides in the cell inner membrane. In terms of biological role, pycsar (pyrimidine cyclase system for antiphage resistance) provides immunity against bacteriophage. The pyrimidine cyclase (PycC) synthesizes cyclic nucleotides in response to infection; these serve as specific second messenger signals. The signals activate the nearby effector, leading to bacterial cell death and abortive phage infection. A clade A Pycsar system. Its function is as follows. The effector gene of a two-gene Pycsar system. Expression of this and uridylate cyclase RsPycC (AC A0A4R2TZQ0) probably confers resistance to bacteriophage. The genes are probably only expressed in response to bacteriophage infection. Probably only responds to cUMP (produced by its cognate NTP cyclase), acts by impairing membrane integrity. The chain is Pycsar effector protein RsPycTM from Rhizobium sp. (strain PP-F2F-G36).